Reading from the N-terminus, the 330-residue chain is Probable ADP,ATP carrier protein At5g56450 (330 aa).

Over residues 1–10 (MCISKEDEED) the composition is skewed to acidic residues. Positions 1–22 (MCISKEDEEDPSRNRRNQSPLS) are disordered. 6 helical membrane passes run 27-61 (LKHF…LQTQ), 103-127 (GSSV…RSIL), 137-171 (IFSG…RLAA), 203-230 (GLPA…EIFS), 236-270 (ELAL…IMMQ), and 300-325 (GALS…KRFL). Solcar repeat units follow at residues 28-126 (KHFQ…YRSI), 139-228 (SGAL…VKEI), and 241-324 (KRWG…VKRF). The ADP site is built by Arg108 and Lys120. Arg264 is a binding site for ADP. Residues 264 to 269 (RRRIMM) carry the Substrate recognition motif.

It belongs to the mitochondrial carrier (TC 2.A.29) family. As to quaternary structure, monomer.

It localises to the membrane. It carries out the reaction ADP(in) + ATP(out) = ADP(out) + ATP(in). Functionally, ADP:ATP antiporter that catalyzes the exchange of ADP and ATP across the membrane. The chain is Probable ADP,ATP carrier protein At5g56450 from Arabidopsis thaliana (Mouse-ear cress).